The chain runs to 132 residues: MPTINQLVRKERKKVTVKSKSPALKECPQRRGVCTRVYTTTPKKPNSALRKVAKVRLTSGFEVISYIGGEGHNLQEHSIVLVRGGRVKDLPGVKYHIVRGALDTAGVAKRTVARSKYGAKRPKAGAAAAAKK.

Asp-89 is modified (3-methylthioaspartic acid).

This sequence belongs to the universal ribosomal protein uS12 family. Part of the 30S ribosomal subunit. Contacts proteins S8 and S17. May interact with IF1 in the 30S initiation complex.

In terms of biological role, with S4 and S5 plays an important role in translational accuracy. Functionally, interacts with and stabilizes bases of the 16S rRNA that are involved in tRNA selection in the A site and with the mRNA backbone. Located at the interface of the 30S and 50S subunits, it traverses the body of the 30S subunit contacting proteins on the other side and probably holding the rRNA structure together. The combined cluster of proteins S8, S12 and S17 appears to hold together the shoulder and platform of the 30S subunit. This is Small ribosomal subunit protein uS12 from Campylobacter curvus (strain 525.92).